The following is a 356-amino-acid chain: 3-deoxy-alpha-D-manno-octulosonate 8-oxidase (356 aa).

It belongs to the iron-containing alcohol dehydrogenase family. It depends on a divalent metal cation as a cofactor.

The catalysed reaction is 3-deoxy-alpha-D-manno-oct-2-ulosonate + O2 = 3,8-dideoxy-8-oxo-alpha-D-manno-octulosonate + H2O2. It functions in the pathway bacterial outer membrane biogenesis; lipopolysaccharide biosynthesis. Inhibited by EDTA. In terms of biological role, catalyzes the first step of the biosynthesis of Kdo8N (8-amino-3,8-dideoxy-D-manno-octulosonate) from Kdo (3-deoxy-D-manno-octulosonate). The chain is 3-deoxy-alpha-D-manno-octulosonate 8-oxidase from Shewanella oneidensis (strain ATCC 700550 / JCM 31522 / CIP 106686 / LMG 19005 / NCIMB 14063 / MR-1).